An 87-amino-acid chain; its full sequence is Small ribosomal subunit protein bS16 (87 aa).

It belongs to the bacterial ribosomal protein bS16 family.

The protein is Small ribosomal subunit protein bS16 of Variovorax paradoxus (strain S110).